The sequence spans 312 residues: Taste receptor type 2 member 135 (312 aa).

At 1 to 19 the chain is on the extracellular side; that stretch reads MSTGHTVLGCQTTDKTVVT. The helical transmembrane segment at 20–40 threads the bilayer; sequence LFIILVLLCLVAVVGNGFIII. Residues 41–66 are Cytoplasmic-facing; it reads ALGMKWLLRRTLSAHNKLLISLAASR. The chain crosses the membrane as a helical span at residues 67–87; the sequence is FCLQCVVIGKNIYVFLNPTSF. Residues 88–97 are Extracellular-facing; sequence PYNPVIQLLN. Residues 98 to 118 form a helical membrane-spanning segment; sequence LMWDFLTAATIWLCSLLGFFY. Residues 119–140 are Cytoplasmic-facing; that stretch reads CVKIATLTHPVFVWLKYRLPGW. The chain crosses the membrane as a helical span at residues 141-161; the sequence is VPWMLLSAVGMSSLTSILCFI. The Extracellular portion of the chain corresponds to 162–198; that stretch reads GNYMIYQNHAKSGHQPWNVTGNSLRHSLEKFYFFSIK. Residue Asn-179 is glycosylated (N-linked (GlcNAc...) asparagine). Residues 199–219 form a helical membrane-spanning segment; it reads IIMWTIPTVVFSIFMSLLLVS. At 220 to 244 the chain is on the cytoplasmic side; it reads LVRHMKKTFLALSELRDVWAQAHFK. Residues 245-265 form a helical membrane-spanning segment; that stretch reads ALLPLLSFIVLFISCFLTLVL. Residues 266 to 277 are Extracellular-facing; it reads SSASNTPYQEFR. Residues 278 to 298 form a helical membrane-spanning segment; that stretch reads YWMWQVVIHLCTVIHPIVILF. Over 299–312 the chain is Cytoplasmic; it reads SNPVLRVVIKRGCC.

Belongs to the G-protein coupled receptor T2R family.

It localises to the membrane. Its function is as follows. Putative taste receptor which may play a role in the perception of bitterness. The protein is Taste receptor type 2 member 135 (Tas2r135) of Mus musculus (Mouse).